A 244-amino-acid chain; its full sequence is UPF0173 metal-dependent hydrolase Rcas_3617 (244 aa).

It belongs to the UPF0173 family.

This is UPF0173 metal-dependent hydrolase Rcas_3617 from Roseiflexus castenholzii (strain DSM 13941 / HLO8).